A 463-amino-acid polypeptide reads, in one-letter code: uncharacterized protein (463 aa).

The protein belongs to the UbiD family.

This is an uncharacterized protein from Rhodospirillum rubrum.